The following is a 137-amino-acid chain: MLQPKRTKFRKTHKGRNRGLANTGNEVSFGTFGLKATSRGQLTARQIEAARRAMTRHVKRQGKIWIRVFPDKPITEKPLEVRMGKGKGNVEYWVCPIQPGKVLYEMDGVPEALAREAFALAAAKLSVQTTFVIKTVM.

Residues 1 to 17 (MLQPKRTKFRKTHKGRN) show a composition bias toward basic residues. The disordered stretch occupies residues 1–24 (MLQPKRTKFRKTHKGRNRGLANTG).

Belongs to the universal ribosomal protein uL16 family. In terms of assembly, part of the 50S ribosomal subunit.

Functionally, binds 23S rRNA and is also seen to make contacts with the A and possibly P site tRNAs. The chain is Large ribosomal subunit protein uL16 from Aeromonas salmonicida (strain A449).